The sequence spans 155 residues: SsrA-binding protein (155 aa).

Residues 132-147 show a composition bias toward basic and acidic residues; that stretch reads KRESIKRREQDRDIKR. The segment at 132–155 is disordered; it reads KRESIKRREQDRDIKRQMKQFNGR.

It belongs to the SmpB family.

It localises to the cytoplasm. In terms of biological role, required for rescue of stalled ribosomes mediated by trans-translation. Binds to transfer-messenger RNA (tmRNA), required for stable association of tmRNA with ribosomes. tmRNA and SmpB together mimic tRNA shape, replacing the anticodon stem-loop with SmpB. tmRNA is encoded by the ssrA gene; the 2 termini fold to resemble tRNA(Ala) and it encodes a 'tag peptide', a short internal open reading frame. During trans-translation Ala-aminoacylated tmRNA acts like a tRNA, entering the A-site of stalled ribosomes, displacing the stalled mRNA. The ribosome then switches to translate the ORF on the tmRNA; the nascent peptide is terminated with the 'tag peptide' encoded by the tmRNA and targeted for degradation. The ribosome is freed to recommence translation, which seems to be the essential function of trans-translation. This Streptococcus mutans serotype c (strain ATCC 700610 / UA159) protein is SsrA-binding protein.